Reading from the N-terminus, the 908-residue chain is NADH-quinone oxidoreductase subunit G (908 aa).

In terms of domain architecture, 2Fe-2S ferredoxin-type spans 2–83 (ATIHVDGKEY…GTFISIDDEE (82 aa)). [2Fe-2S] cluster contacts are provided by Cys-34, Cys-45, Cys-48, and Cys-67. The 4Fe-4S His(Cys)3-ligated-type domain maps to 83–122 (EAKQFRESVVEWLMTNHPHDCPVCEEGGNCHLQDMTVMTG). [4Fe-4S] cluster-binding residues include His-99, Cys-103, Cys-106, Cys-112, Cys-151, Cys-154, Cys-157, Cys-201, Cys-228, Cys-231, Cys-235, and Cys-263. One can recognise a 4Fe-4S Mo/W bis-MGD-type domain in the interval 221-277 (MQFAPSICQQCSIGCNISPGERYGELRRIENRYNGTVNHYFLCDRGRFGYGYVNLKD).

It belongs to the complex I 75 kDa subunit family. Composed of 13 different subunits. Subunits NuoCD, E, F, and G constitute the peripheral sector of the complex. [2Fe-2S] cluster serves as cofactor. The cofactor is [4Fe-4S] cluster.

The catalysed reaction is a quinone + NADH + 5 H(+)(in) = a quinol + NAD(+) + 4 H(+)(out). In terms of biological role, NDH-1 shuttles electrons from NADH, via FMN and iron-sulfur (Fe-S) centers, to quinones in the respiratory chain. The immediate electron acceptor for the enzyme in this species is believed to be ubiquinone. Couples the redox reaction to proton translocation (for every two electrons transferred, four hydrogen ions are translocated across the cytoplasmic membrane), and thus conserves the redox energy in a proton gradient. In Salmonella typhi, this protein is NADH-quinone oxidoreductase subunit G (nuoG).